A 173-amino-acid chain; its full sequence is Crossover junction endodeoxyribonuclease RuvC (173 aa).

Active-site residues include Asp8, Glu67, and Asp139. 3 residues coordinate Mg(2+): Asp8, Glu67, and Asp139.

This sequence belongs to the RuvC family. In terms of assembly, homodimer which binds Holliday junction (HJ) DNA. The HJ becomes 2-fold symmetrical on binding to RuvC with unstacked arms; it has a different conformation from HJ DNA in complex with RuvA. In the full resolvosome a probable DNA-RuvA(4)-RuvB(12)-RuvC(2) complex forms which resolves the HJ. Requires Mg(2+) as cofactor.

The protein resides in the cytoplasm. The enzyme catalyses Endonucleolytic cleavage at a junction such as a reciprocal single-stranded crossover between two homologous DNA duplexes (Holliday junction).. Functionally, the RuvA-RuvB-RuvC complex processes Holliday junction (HJ) DNA during genetic recombination and DNA repair. Endonuclease that resolves HJ intermediates. Cleaves cruciform DNA by making single-stranded nicks across the HJ at symmetrical positions within the homologous arms, yielding a 5'-phosphate and a 3'-hydroxyl group; requires a central core of homology in the junction. The consensus cleavage sequence is 5'-(A/T)TT(C/G)-3'. Cleavage occurs on the 3'-side of the TT dinucleotide at the point of strand exchange. HJ branch migration catalyzed by RuvA-RuvB allows RuvC to scan DNA until it finds its consensus sequence, where it cleaves and resolves the cruciform DNA. In Klebsiella pneumoniae subsp. pneumoniae (strain ATCC 700721 / MGH 78578), this protein is Crossover junction endodeoxyribonuclease RuvC.